Here is an 859-residue protein sequence, read N- to C-terminus: MTKSNADLSAHTPMMQQYWKLKREHPDQLMFYRMGDFYELFYDDAKKAAALLDITLTARGQSAGTAIPMAGIPFHSAEGYLARLVKLGESVVICEQIGDPATSKGPVERQVVRIITPGTVSDEALLDERRDNLLAAVVGDEKLFGLSVLDIASGRFSVQELKGWETLLAELERLSPAELLIPDDWPQGLPLEKRRGVRRRAPWDFDRDSAFKSLCQQFSTQDLKGFGCENLTLAIGAAGCLLAYAKETQRTALPHLRSLRHERLDDTVILDGASRRNLELDVNLAGGRENTLQSVMDRCQTAMGSRLLTRWLNRPLRNREILEARQDSITCLLEHYRFEQLQPQLKDIGDLERILARIGLRNARPRDLARLRDALAALPQLQAGMQDLVAPHLLGLAKSIGTYPELADLLARAIIDNPPAVIRDGGVLKTGYDAELDELQSLSENAGQYLMDLETREKARTGLANLKVGYNRVHGYFIELPSKQAESAPADYIRRQTLKGAERFITPELKEFEDKALSAKSRALAREKLLYDELLEMLIGHLAPLQESAAALAELDVLSNLAERALNLDLNRPRFVEQPCLRIEQGRHPVVEQVLETPFVANDLALDDATRMLVITGPNMGGKSTYMRQTALIVLLAQIGSFVPAAACELSLVDRIFTRIGSSDDLAGGRSTFMVEMSETANILHNASDRSLVLMDEVGRGTSTFDGLSLAWAAAEQLARLRAFTLFATHYFELTVLPESEPVVANVHLSATEHNERIVFLHHVLPGPASQSYGLAVAQLAGVPGEVIQRARDHLSRLETTSLPHEAPRMAPGQPAPPMQSDLFASLPHPVLEELGRINPDDVTPRQALELLYSLKSRI.

617 to 624 is an ATP binding site; that stretch reads GPNMGGKS.

Belongs to the DNA mismatch repair MutS family.

Functionally, this protein is involved in the repair of mismatches in DNA. It is possible that it carries out the mismatch recognition step. This protein has a weak ATPase activity. This is DNA mismatch repair protein MutS from Stutzerimonas stutzeri (strain A1501) (Pseudomonas stutzeri).